The chain runs to 639 residues: 1-deoxy-D-xylulose-5-phosphate synthase 1 (639 aa).

Thiamine diphosphate is bound by residues histidine 79 and 120–122 (AHS). Aspartate 155 serves as a coordination point for Mg(2+). Residues 156–157 (GA), asparagine 184, tyrosine 293, and glutamate 373 contribute to the thiamine diphosphate site. Position 184 (asparagine 184) interacts with Mg(2+).

The protein belongs to the transketolase family. DXPS subfamily. As to quaternary structure, homodimer. Mg(2+) serves as cofactor. Thiamine diphosphate is required as a cofactor.

The enzyme catalyses D-glyceraldehyde 3-phosphate + pyruvate + H(+) = 1-deoxy-D-xylulose 5-phosphate + CO2. The protein operates within metabolic intermediate biosynthesis; 1-deoxy-D-xylulose 5-phosphate biosynthesis; 1-deoxy-D-xylulose 5-phosphate from D-glyceraldehyde 3-phosphate and pyruvate: step 1/1. In terms of biological role, catalyzes the acyloin condensation reaction between C atoms 2 and 3 of pyruvate and glyceraldehyde 3-phosphate to yield 1-deoxy-D-xylulose-5-phosphate (DXP). This is 1-deoxy-D-xylulose-5-phosphate synthase 1 from Jannaschia sp. (strain CCS1).